Reading from the N-terminus, the 178-residue chain is Conodipine-P2 (178 aa).

Residues 1–24 (MKLLAPVLWAMAALGVTWLVAVDS) form the signal peptide. 4-hydroxyproline occurs at positions 38, 42, and 49. His-54 is an active-site residue. Positions 98 to 130 (KREVTSHRATSIAHSRLWKTALDQKSFLNRKAR) are cleaved as a propeptide — interchain peptide. Gln-131 is subject to Pyrrolidone carboxylic acid. The residue at position 137 (Pro-137) is a 4-hydroxyproline.

It belongs to the phospholipase A2 family. Group IX subfamily. As to quaternary structure, heterodimer of an alpha and a beta chain; probably disulfide-linked. It depends on Ca(2+) as a cofactor. In terms of tissue distribution, expressed by the venom duct.

It localises to the secreted. It catalyses the reaction a 1,2-diacyl-sn-glycero-3-phosphocholine + H2O = a 1-acyl-sn-glycero-3-phosphocholine + a fatty acid + H(+). Catalyzes the calcium-dependent hydrolysis of the 2-acyl groups in 3-sn-phosphoglycerides. This chain is Conodipine-P2, found in Conus purpurascens (Purple cone).